Consider the following 306-residue polypeptide: Methionyl-tRNA formyltransferase (306 aa).

Serine 109–proline 112 provides a ligand contact to (6S)-5,6,7,8-tetrahydrofolate.

This sequence belongs to the Fmt family.

The enzyme catalyses L-methionyl-tRNA(fMet) + (6R)-10-formyltetrahydrofolate = N-formyl-L-methionyl-tRNA(fMet) + (6S)-5,6,7,8-tetrahydrofolate + H(+). Attaches a formyl group to the free amino group of methionyl-tRNA(fMet). The formyl group appears to play a dual role in the initiator identity of N-formylmethionyl-tRNA by promoting its recognition by IF2 and preventing the misappropriation of this tRNA by the elongation apparatus. The polypeptide is Methionyl-tRNA formyltransferase (Sphingopyxis alaskensis (strain DSM 13593 / LMG 18877 / RB2256) (Sphingomonas alaskensis)).